A 326-amino-acid polypeptide reads, in one-letter code: Vitamin B12 import system permease protein BtuC (326 aa).

A run of 9 helical transmembrane segments spans residues 15 to 35, 61 to 81, 88 to 108, 112 to 132, 146 to 166, 184 to 204, 240 to 260, 274 to 294, and 302 to 322; these read WLLS…CAGE, LAVL…QALF, PGLL…VLLG, LPGW…TLIL, LLAG…AIYF, GGVD…LIWI, GWMV…GLVI, VLLP…DVVA, and ELPI…WLLL.

This sequence belongs to the binding-protein-dependent transport system permease family. FecCD subfamily. The complex is composed of two ATP-binding proteins (BtuD), two transmembrane proteins (BtuC) and a solute-binding protein (BtuF).

Its subcellular location is the cell inner membrane. Its function is as follows. Part of the ABC transporter complex BtuCDF involved in vitamin B12 import. Involved in the translocation of the substrate across the membrane. The sequence is that of Vitamin B12 import system permease protein BtuC from Salmonella choleraesuis (strain SC-B67).